A 255-amino-acid polypeptide reads, in one-letter code: MAAEIRVFTCLKDNFGYLVHDSDSGATASIDAPEAAPILAALAREGWTLTDILVTHHHADHIGGIAELKQATNCRVVAPHDNGAAIPLVDLRVRQGDVVKIGGLLARVLETPGHTLDHVAYVFDDDKALFAADTLFSIGCGRVFEGTYPMMWESLLKLRVLPDDMRLYCGHEYTAANVKFALTVEPNNPALQARAAEVAHLRTAGLPTIPTLLGDEKRANVFLRADEPTVAAGVRLKGAGAVEVFTELRERKNKS.

Positions 56, 58, 60, 61, 114, 133, and 171 each coordinate Zn(2+).

Belongs to the metallo-beta-lactamase superfamily. Glyoxalase II family. As to quaternary structure, monomer. The cofactor is Zn(2+).

It catalyses the reaction an S-(2-hydroxyacyl)glutathione + H2O = a 2-hydroxy carboxylate + glutathione + H(+). It participates in secondary metabolite metabolism; methylglyoxal degradation; (R)-lactate from methylglyoxal: step 2/2. Functionally, thiolesterase that catalyzes the hydrolysis of S-D-lactoyl-glutathione to form glutathione and D-lactic acid. The chain is Hydroxyacylglutathione hydrolase from Rhodopseudomonas palustris (strain BisB18).